A 368-amino-acid chain; its full sequence is 3-dehydroquinate synthase (368 aa).

NAD(+)-binding positions include 69–74 (DGEAYK), 103–107 (GVIGD), 127–128 (TT), lysine 140, and lysine 149. Zn(2+) is bound by residues glutamate 182, histidine 245, and histidine 262.

Belongs to the sugar phosphate cyclases superfamily. Dehydroquinate synthase family. Requires Co(2+) as cofactor. It depends on Zn(2+) as a cofactor. NAD(+) is required as a cofactor.

It localises to the cytoplasm. The enzyme catalyses 7-phospho-2-dehydro-3-deoxy-D-arabino-heptonate = 3-dehydroquinate + phosphate. The protein operates within metabolic intermediate biosynthesis; chorismate biosynthesis; chorismate from D-erythrose 4-phosphate and phosphoenolpyruvate: step 2/7. Its function is as follows. Catalyzes the conversion of 3-deoxy-D-arabino-heptulosonate 7-phosphate (DAHP) to dehydroquinate (DHQ). In Pseudomonas aeruginosa (strain LESB58), this protein is 3-dehydroquinate synthase.